We begin with the raw amino-acid sequence, 122 residues long: Acidic phospholipase A2 4 (122 aa).

7 cysteine pairs are disulfide-bonded: cysteine 26-cysteine 115, cysteine 28-cysteine 44, cysteine 43-cysteine 95, cysteine 49-cysteine 122, cysteine 50-cysteine 88, cysteine 57-cysteine 81, and cysteine 75-cysteine 86. 3 residues coordinate Ca(2+): phenylalanine 27, glycine 29, and glycine 31. Histidine 47 is a catalytic residue. Aspartate 48 provides a ligand contact to Ca(2+). Aspartate 89 is a catalytic residue.

This sequence belongs to the phospholipase A2 family. Group II subfamily. D49 sub-subfamily. The cofactor is Ca(2+). As to expression, expressed by the venom gland.

It is found in the secreted. It carries out the reaction a 1,2-diacyl-sn-glycero-3-phosphocholine + H2O = a 1-acyl-sn-glycero-3-phosphocholine + a fatty acid + H(+). In terms of biological role, snake venom phospholipase A2 (PLA2) that has high lipolytic activity. PLA2 catalyzes the calcium-dependent hydrolysis of the 2-acyl groups in 3-sn-phosphoglycerides. The protein is Acidic phospholipase A2 4 of Craspedocephalus gramineus (Bamboo pit viper).